The following is a 341-amino-acid chain: L-threonine 3-dehydrogenase (341 aa).

Cys-38 provides a ligand contact to Zn(2+). Active-site charge relay system residues include Thr-40 and His-43. Positions 63, 64, 93, 96, 99, and 107 each coordinate Zn(2+). NAD(+) is bound by residues Ile-175, Asp-195, Arg-200, 262–264, and 286–287; these read LGI and IY.

This sequence belongs to the zinc-containing alcohol dehydrogenase family. As to quaternary structure, homotetramer. It depends on Zn(2+) as a cofactor.

Its subcellular location is the cytoplasm. It catalyses the reaction L-threonine + NAD(+) = (2S)-2-amino-3-oxobutanoate + NADH + H(+). Its pathway is amino-acid degradation; L-threonine degradation via oxydo-reductase pathway; glycine from L-threonine: step 1/2. In terms of biological role, catalyzes the NAD(+)-dependent oxidation of L-threonine to 2-amino-3-ketobutyrate. The protein is L-threonine 3-dehydrogenase of Pseudoalteromonas translucida (strain TAC 125).